The following is a 644-amino-acid chain: DNA mismatch repair protein MutL (644 aa).

A disordered region spans residues 336-356 (KRNINPLNRDDKTKDKSEYQK). Residues 343–356 (NRDDKTKDKSEYQK) are compositionally biased toward basic and acidic residues.

This sequence belongs to the DNA mismatch repair MutL/HexB family.

Its function is as follows. This protein is involved in the repair of mismatches in DNA. It is required for dam-dependent methyl-directed DNA mismatch repair. May act as a 'molecular matchmaker', a protein that promotes the formation of a stable complex between two or more DNA-binding proteins in an ATP-dependent manner without itself being part of a final effector complex. In Halothermothrix orenii (strain H 168 / OCM 544 / DSM 9562), this protein is DNA mismatch repair protein MutL.